The sequence spans 154 residues: Ribosome maturation factor RimP (154 aa).

The protein belongs to the RimP family.

Its subcellular location is the cytoplasm. Functionally, required for maturation of 30S ribosomal subunits. The polypeptide is Ribosome maturation factor RimP (Heliobacterium modesticaldum (strain ATCC 51547 / Ice1)).